Reading from the N-terminus, the 254-residue chain is 5-oxoprolinase subunit A (254 aa).

This sequence belongs to the LamB/PxpA family. Forms a complex composed of PxpA, PxpB and PxpC.

The enzyme catalyses 5-oxo-L-proline + ATP + 2 H2O = L-glutamate + ADP + phosphate + H(+). Functionally, catalyzes the cleavage of 5-oxoproline to form L-glutamate coupled to the hydrolysis of ATP to ADP and inorganic phosphate. The polypeptide is 5-oxoprolinase subunit A (Rhodopseudomonas palustris (strain BisB5)).